The sequence spans 248 residues: Ubiquinone biosynthesis O-methyltransferase (248 aa).

S-adenosyl-L-methionine-binding residues include Arg-41, Gly-72, Asp-93, and Met-136.

Belongs to the methyltransferase superfamily. UbiG/COQ3 family.

The enzyme catalyses a 3-demethylubiquinol + S-adenosyl-L-methionine = a ubiquinol + S-adenosyl-L-homocysteine + H(+). The catalysed reaction is a 3-(all-trans-polyprenyl)benzene-1,2-diol + S-adenosyl-L-methionine = a 2-methoxy-6-(all-trans-polyprenyl)phenol + S-adenosyl-L-homocysteine + H(+). It functions in the pathway cofactor biosynthesis; ubiquinone biosynthesis. Its function is as follows. O-methyltransferase that catalyzes the 2 O-methylation steps in the ubiquinone biosynthetic pathway. The chain is Ubiquinone biosynthesis O-methyltransferase from Brucella anthropi (strain ATCC 49188 / DSM 6882 / CCUG 24695 / JCM 21032 / LMG 3331 / NBRC 15819 / NCTC 12168 / Alc 37) (Ochrobactrum anthropi).